A 285-amino-acid chain; its full sequence is Bifunctional protein FolD (285 aa).

Residues 166–168 (GAS) and isoleucine 232 contribute to the NADP(+) site.

The protein belongs to the tetrahydrofolate dehydrogenase/cyclohydrolase family. In terms of assembly, homodimer.

It carries out the reaction (6R)-5,10-methylene-5,6,7,8-tetrahydrofolate + NADP(+) = (6R)-5,10-methenyltetrahydrofolate + NADPH. The enzyme catalyses (6R)-5,10-methenyltetrahydrofolate + H2O = (6R)-10-formyltetrahydrofolate + H(+). Its pathway is one-carbon metabolism; tetrahydrofolate interconversion. Catalyzes the oxidation of 5,10-methylenetetrahydrofolate to 5,10-methenyltetrahydrofolate and then the hydrolysis of 5,10-methenyltetrahydrofolate to 10-formyltetrahydrofolate. This chain is Bifunctional protein FolD, found in Vibrio vulnificus (strain CMCP6).